Reading from the N-terminus, the 1016-residue chain is Primary septum glucan endo-1,3-beta-D-glucosidase (1016 aa).

The signal sequence occupies residues 1–20 (MSSYLRSFIFGLLTISLAQC). An N-linked (GlcNAc...) asparagine glycan is attached at asparagine 37. Positions 45 to 272 (TNVFDSVVDT…NGYIQIAKIP (228 aa)) are beta-sandwich subdomain. The 697-residue stretch at 45–741 (TNVFDSVVDT…AYAAGLWAND (697 aa)) folds into the GH81 domain. An alpha/beta subdomain region spans residues 273–364 (LGDGTAEALY…AGNSITFAEA (92 aa)). A (alpha/beta)6 barrel subdomain region spans residues 379–741 (GQIGYSEEAL…AYAAGLWAND (363 aa)). Residue aspartate 492 is part of the active site. 5 residues coordinate (1,3-beta-D-glucosyl)n: histidine 496, aspartate 567, glutamate 569, glutamate 573, and tyrosine 650. Active-site residues include glutamate 569 and glutamate 573. The segment at 748–1016 (SSSSTTTTST…GCSNGALVAA (269 aa)) is required for catalytic activity against insoluble beta-glucan and to restrict localization of the enzyme to the cell septum. The segment at 844-872 (SSTTSSITPTPTTTSSITPTPTTTSTTTT) is disordered.

This sequence belongs to the glycosyl hydrolase 81 family.

Its subcellular location is the cell septum. It catalyses the reaction Hydrolysis of (1-&gt;3)-beta-D-glucosidic linkages in (1-&gt;3)-beta-D-glucans.. Cleaves internal linkages in 1,3-beta-glucan. Has a role in cell separation where it is required for the degradation of the primary septum after completion of cytokinesis. This is Primary septum glucan endo-1,3-beta-D-glucosidase from Schizosaccharomyces pombe (strain 972 / ATCC 24843) (Fission yeast).